A 465-amino-acid chain; its full sequence is UDP-N-acetylmuramate--L-alanine ligase (465 aa).

115 to 121 (GAHGKTT) contributes to the ATP binding site.

Belongs to the MurCDEF family.

The protein resides in the cytoplasm. The catalysed reaction is UDP-N-acetyl-alpha-D-muramate + L-alanine + ATP = UDP-N-acetyl-alpha-D-muramoyl-L-alanine + ADP + phosphate + H(+). The protein operates within cell wall biogenesis; peptidoglycan biosynthesis. Its function is as follows. Cell wall formation. The protein is UDP-N-acetylmuramate--L-alanine ligase of Coxiella burnetii (strain CbuK_Q154) (Coxiella burnetii (strain Q154)).